The sequence spans 202 residues: Adapter protein MecA 2 (202 aa).

Belongs to the MecA family. Homodimer.

Enables the recognition and targeting of unfolded and aggregated proteins to the ClpC protease or to other proteins involved in proteolysis. Acts negatively in the development of competence by binding ComK and recruiting it to the ClpCP protease. When overexpressed, inhibits sporulation. Also involved in Spx degradation by ClpC. The polypeptide is Adapter protein MecA 2 (mecA2) (Bacillus cereus (strain ATCC 14579 / DSM 31 / CCUG 7414 / JCM 2152 / NBRC 15305 / NCIMB 9373 / NCTC 2599 / NRRL B-3711)).